The chain runs to 1031 residues: Probable ATP-dependent RNA helicase DDX46 (1031 aa).

The span at 1 to 24 (MGRESRHYRKRSASRGRSGSRSRS) shows a compositional bias: basic residues. The disordered stretch occupies residues 1-228 (MGRESRHYRK…EMEGEELDPL (228 aa)). A lipid anchor (N-myristoyl glycine) is attached at Gly-2. A compositionally biased stretch (basic and acidic residues) spans 26–49 (SPSDKRSKRGDDRRSRSRDRDRRR). 2 stretches are compositionally biased toward basic residues: residues 50-73 (ERSR…RSRS) and 81-103 (ERRR…RRSR). Positions 112–200 (KKTENRSRSK…EMKQGKKWSL (89 aa)) are enriched in basic and acidic residues. The stretch at 152 to 197 (DQNKLEEEMRKRKERVEKWREEQRKKAMENIGELKKEIEEMKQGKK) forms a coiled coil. A Glycyl lysine isopeptide (Lys-Gly) (interchain with G-Cter in SUMO2) cross-link involves residue Lys-186. Ser-199 carries the post-translational modification Phosphoserine. Composition is skewed to acidic residues over residues 201 to 211 (EDDDDDEDDPA) and 219 to 228 (EMEGEELDPL). At Lys-263 the chain carries N6-acetyllysine. Tyr-294 carries the post-translational modification Phosphotyrosine. Phosphoserine is present on residues Ser-295 and Ser-296. Residue Lys-325 forms a Glycyl lysine isopeptide (Lys-Gly) (interchain with G-Cter in SUMO2) linkage. Position 346 is a phosphoserine (Ser-346). The Q motif motif lies at 372–400 (KSWVQCGISMKILNSLKKHGYEKPTPIQT). In terms of domain architecture, Helicase ATP-binding spans 403–581 (IPAIMSGRDL…RRILSKPIEV (179 aa)). 416 to 423 (AKTGSGKT) serves as a coordination point for ATP. Positions 529 to 532 (DEAD) match the DEAD box motif. The Helicase C-terminal domain occupies 592-753 (DVEQQVIVIE…AVPPDLEKLW (162 aa)). Residue Lys-776 is modified to N6-acetyllysine. Lys-779 participates in a covalent cross-link: Glycyl lysine isopeptide (Lys-Gly) (interchain with G-Cter in SUMO2). Ser-804 carries the phosphoserine modification. Residue Lys-903 is modified to N6-acetyllysine. Glycyl lysine isopeptide (Lys-Gly) (interchain with G-Cter in SUMO2) cross-links involve residues Lys-907 and Lys-915. The residue at position 928 (Ser-928) is a Phosphoserine.

The protein belongs to the DEAD box helicase family. DDX46/PRP5 subfamily. Component of the 17S U2 SnRNP complex, a ribonucleoprotein complex that contains small nuclear RNA (snRNA) U2 and a number of specific proteins. Within the 17S U2 SnRNP complex, DDX46 is part of the SF3B subcomplex, which is required for 'A' complex assembly formed by the stable binding of U2 snRNP to the branchpoint sequence in pre-mRNA. Recruited to the 17S U2 SnRNP complex following release of DDX42; DDX42 and DDX46 bind the SF3B subcomplex in a competitive manner.

Its subcellular location is the nucleus speckle. The protein localises to the nucleus. It localises to the cajal body. The catalysed reaction is ATP + H2O = ADP + phosphate + H(+). In terms of biological role, component of the 17S U2 SnRNP complex of the spliceosome, a large ribonucleoprotein complex that removes introns from transcribed pre-mRNAs. The 17S U2 SnRNP complex (1) directly participates in early spliceosome assembly and (2) mediates recognition of the intron branch site during pre-mRNA splicing by promoting the selection of the pre-mRNA branch-site adenosine, the nucleophile for the first step of splicing. Within the 17S U2 SnRNP complex, DDX46 plays essential roles during assembly of pre-spliceosome and proofreading of the branch site. The sequence is that of Probable ATP-dependent RNA helicase DDX46 from Homo sapiens (Human).